A 490-amino-acid polypeptide reads, in one-letter code: MSDVQVHQLYIHGRYVEATSGKTFNSINPANGEIIATLQQASEQDIEAAVKSAQQGQKIWAAMTAMERSRILRRAVDILRERNDELARLETLDTGKAYSETSTVDIVTGADVLEYYAGLATAIQGEQVPLRESSFFYTRREPLGVVAGIGAWNYPIQIALWKSAPALAAGNAMIFKPSETTPLTALKLAEIYTEAGLPDGVFNVVQGAGREIGQWLTEHPVIEKISFTGGVETGKKVMASAAGSTLKEVTMELGGKSPLIICEDADLNRAADIAVMANFFSSGQVCTNGTRVFVPKSRLADFEKAVVERVKRIRVGDPMAEDTNFGPLTSFPHMEKVLSFIESGKQQGAKVLIGGGRATEGELAKGAYVLPTVFSDCTDQMAIVQEEIFGPVMSILSYETEEEVIQRANDTTFGLAAGVVTQDISRAHRIIHQIEAGICWINTWGESPAEMPVGGYKQSGVGRENGLTTLGHYTRIKSIQVELGDYQSIF.

3 residues coordinate K(+): serine 26, isoleucine 27, and aspartate 93. An NAD(+)-binding site is contributed by 150–152 (GAW). The Charge relay system role is filled by lysine 162. NAD(+) contacts are provided by residues 176-179 (KPSE) and 230-233 (GVET). Leucine 246 lines the K(+) pocket. The active-site Proton acceptor is the glutamate 252. Residues glycine 254, cysteine 286, and glutamate 387 each contribute to the NAD(+) site. The Nucleophile role is filled by cysteine 286. Cysteine 286 carries the cysteine sulfenic acid (-SOH) modification. Residues lysine 457 and glycine 460 each coordinate K(+). Glutamate 464 acts as the Charge relay system in catalysis.

The protein belongs to the aldehyde dehydrogenase family. Dimer of dimers. K(+) serves as cofactor.

It catalyses the reaction betaine aldehyde + NAD(+) + H2O = glycine betaine + NADH + 2 H(+). It participates in amine and polyamine biosynthesis; betaine biosynthesis via choline pathway; betaine from betaine aldehyde: step 1/1. Functionally, involved in the biosynthesis of the osmoprotectant glycine betaine. Catalyzes the irreversible oxidation of betaine aldehyde to the corresponding acid. In Acinetobacter baumannii (strain AB307-0294), this protein is Betaine aldehyde dehydrogenase.